The chain runs to 83 residues: Large ribosomal subunit protein bL31B (83 aa).

The protein belongs to the bacterial ribosomal protein bL31 family. Type B subfamily. As to quaternary structure, part of the 50S ribosomal subunit.

The sequence is that of Large ribosomal subunit protein bL31B from Lacticaseibacillus casei (strain BL23) (Lactobacillus casei).